Here is an 89-residue protein sequence, read N- to C-terminus: Transcriptional regulator WhiB2 (89 aa).

The span at 1-15 (MVPEAPAPFEEPLPP) shows a compositional bias: pro residues. The interval 1–24 (MVPEAPAPFEEPLPPEATDQWQDR) is disordered. A 4Fe-4S Wbl-type domain is found at 26-83 (LCAQTDPEAFFPEKGGSTREAKKICMGCEVRHECLEYALAHDERFGIWGGLSERERRR). Cys-27 provides a ligand contact to [4Fe-4S] cluster. Phosphoserine is present on Ser-42. [4Fe-4S] cluster is bound by residues Cys-50, Cys-53, and Cys-59.

Belongs to the WhiB family. [4Fe-4S] cluster is required as a cofactor. May be phosphorylated, possibly on Ser-42. Post-translationally, the cluster is degraded quickly in the presence of air. Upon cluster removal intramolecular disulfide bonds are formed. In terms of processing, the Fe-S cluster can be nitrosylated by nitric oxide (NO).

The protein resides in the cytoplasm. Acts as a transcriptional regulator. Probably redox-responsive. The apo- but not holo-form probably binds DNA. Functionally, the apo-form functions as a chaperone, preventing aggregation or helping in correct refolding of a number of substrates; this activity does not require ATP or the ability to bind a Fe-S cluster. Chaperone activity is insensitive to the redox state of its cysteine residues. The apo-form has no protein disulfide reductase activity. The apo-form binds to its own promoter. This chain is Transcriptional regulator WhiB2 (whiB2), found in Mycobacterium tuberculosis (strain ATCC 25618 / H37Rv).